Reading from the N-terminus, the 244-residue chain is ATP synthase subunit a (244 aa).

Helical transmembrane passes span Phe-20–Ile-40, Gly-81–Met-101, Gln-113–Phe-133, Phe-140–Ile-160, Leu-176–Tyr-196, Phe-202–Ala-222, and Phe-223–Leu-243.

Belongs to the ATPase A chain family. In terms of assembly, F-type ATPases have 2 components, CF(1) - the catalytic core - and CF(0) - the membrane proton channel. CF(1) has five subunits: alpha(3), beta(3), gamma(1), delta(1), epsilon(1). CF(0) has three main subunits: a, b and c.

It is found in the mitochondrion inner membrane. Functionally, mitochondrial membrane ATP synthase (F(1)F(0) ATP synthase or Complex V) produces ATP from ADP in the presence of a proton gradient across the membrane which is generated by electron transport complexes of the respiratory chain. F-type ATPases consist of two structural domains, F(1) - containing the extramembraneous catalytic core and F(0) - containing the membrane proton channel, linked together by a central stalk and a peripheral stalk. During catalysis, ATP synthesis in the catalytic domain of F(1) is coupled via a rotary mechanism of the central stalk subunits to proton translocation. Key component of the proton channel; it may play a direct role in the translocation of protons across the membrane. The polypeptide is ATP synthase subunit a (atp6) (Dictyostelium citrinum (Slime mold)).